Reading from the N-terminus, the 335-residue chain is Prepilin leader peptidase/N-methyltransferase (335 aa).

A helical membrane pass occupies residues 13–33; sequence LFAVFLFVLGLCVGSFLNVVI. Positions 49, 52, 74, and 77 each coordinate Zn(2+). A run of 5 helical transmembrane segments spans residues 105-125, 131-151, 206-226, 258-278, and 299-319; these read WTYE…LAFI, ILPL…AFPL, LLGV…LMLL, PGLP…VQPI, and IPFG…GPWL.

Belongs to the peptidase A24 family. It depends on Zn(2+) as a cofactor.

It is found in the cell inner membrane. The enzyme catalyses Typically cleaves a -Gly-|-Phe- bond to release an N-terminal, basic peptide of 5-8 residues from type IV prepilin, and then N-methylates the new N-terminal amino group, the methyl donor being S-adenosyl-L-methionine.. Its function is as follows. Plays an essential role in type IV pili and type II pseudopili formation by proteolytically removing the leader sequence from substrate proteins and subsequently monomethylating the alpha-amino group of the newly exposed N-terminal phenylalanine. This is Prepilin leader peptidase/N-methyltransferase (pilD) from Myxococcus xanthus (strain DK1622).